The primary structure comprises 150 residues: Arginine repressor (150 aa).

It belongs to the ArgR family.

It localises to the cytoplasm. The protein operates within amino-acid biosynthesis; L-arginine biosynthesis [regulation]. In terms of biological role, regulates arginine biosynthesis genes. This is Arginine repressor from Staphylococcus epidermidis (strain ATCC 35984 / DSM 28319 / BCRC 17069 / CCUG 31568 / BM 3577 / RP62A).